The primary structure comprises 497 residues: MDSFIFLRSIGTKFGQLESSPAILSLTLAPILAIILLLLFRYNHRSSVKLPPGKLGFPLIGETIQLLRTLRSETPQKFFDDRLKKFGPVYMTSLIGHPTVVLCGPAGNKLVLSNEDKLVEMEGPKSFMKLIGEDSIVAKRGEDHRILRTALARFLGAQALQNYLGRMSSEIGHHFNEKWKGKDEVKVLPLVRGLIFSIASTLFFDVNDGHQQKQLHHLLETILVGSLSVPLDFPGTRYRKGLQARLKLDEILSSLIKRRRRDLRSGIASDDQDLLSVLLTFRDEKGNSLTDQGILDNFSAMFHASYDTTVAPMALIFKLLYSNPEYHEKVFQEQLEIIGNKKEGEEISWKDLKSMKYTWQAVQESLRMYPPVFGIFRKAITDIHYDGYTIPKGWRVLCSPYTTHLREEYFPEPEEFRPSRFEDEGRHVTPYTYVPFGGGLRTCPGWEFSKIEILLFVHHFVKNFSSYIPVDPNEKVLSDPLPPLPANGFSIKLFPRS.

C443 contributes to the heme binding site.

It belongs to the cytochrome P450 family. Heme is required as a cofactor.

The catalysed reaction is taxa-4(20),11-dien-5alpha-yl acetate + reduced [NADPH--hemoprotein reductase] + O2 = 10beta-hydroxytaxa-4(20),11-dien-5alpha-yl acetate + oxidized [NADPH--hemoprotein reductase] + H2O + H(+). The protein operates within alkaloid biosynthesis; taxol biosynthesis; 10-deacetyl-2-debenzoylbaccatin III from taxa-4(20),11-dien-5alpha-ol: step 2/3. Its function is as follows. Involved in the transformation of a taxadienyl acetate by hydroxylation at C10 to yield taxadien-5-alpha-acetoxy-10-beta-ol. This is Taxane 10-beta-hydroxylase (CYP725A1) from Taxus cuspidata (Japanese yew).